Reading from the N-terminus, the 121-residue chain is Two-component response regulator ORR12 (121 aa).

A Response regulatory domain is found at 5 to 121; it reads HVLVVDDTLV…VDLPRILNYI (117 aa). D55 bears the 4-aspartylphosphate mark.

This sequence belongs to the ARR family. Type-A subfamily. Post-translationally, two-component system major event consists of a His-to-Asp phosphorelay between a sensor histidine kinase (HK) and a response regulator (RR). In plants, the His-to-Asp phosphorelay involves an additional intermediate named Histidine-containing phosphotransfer protein (HPt). This multistep phosphorelay consists of a His-Asp-His-Asp sequential transfer of a phosphate group between first a His and an Asp of the HK protein, followed by the transfer to a conserved His of the HPt protein and finally the transfer to an Asp in the receiver domain of the RR protein. In terms of tissue distribution, expressed in flowers and panicles.

Functionally, functions as a response regulator involved in His-to-Asp phosphorelay signal transduction system. Phosphorylation of the Asp residue in the receiver domain activates the ability of the protein to promote the transcription of target genes. Type-A response regulators seem to act as negative regulators of the cytokinin signaling. This Oryza sativa subsp. japonica (Rice) protein is Two-component response regulator ORR12.